The primary structure comprises 161 residues: Ribosome maturation factor RimP (161 aa).

It belongs to the RimP family.

It localises to the cytoplasm. In terms of biological role, required for maturation of 30S ribosomal subunits. This chain is Ribosome maturation factor RimP, found in Rickettsia typhi (strain ATCC VR-144 / Wilmington).